Here is a 221-residue protein sequence, read N- to C-terminus: UPF0502 protein PA14_19450 (221 aa).

The protein belongs to the UPF0502 family.

The polypeptide is UPF0502 protein PA14_19450 (Pseudomonas aeruginosa (strain UCBPP-PA14)).